Consider the following 509-residue polypeptide: ATP synthase subunit alpha (509 aa).

Residue 169 to 176 (GDRQTGKT) participates in ATP binding.

It belongs to the ATPase alpha/beta chains family. As to quaternary structure, F-type ATPases have 2 components, CF(1) - the catalytic core - and CF(0) - the membrane proton channel. CF(1) has five subunits: alpha(3), beta(3), gamma(1), delta(1), epsilon(1). CF(0) has four main subunits: a(1), b(1), b'(1) and c(9-12).

Its subcellular location is the cell inner membrane. The catalysed reaction is ATP + H2O + 4 H(+)(in) = ADP + phosphate + 5 H(+)(out). In terms of biological role, produces ATP from ADP in the presence of a proton gradient across the membrane. The alpha chain is a regulatory subunit. This Erythrobacter litoralis (strain HTCC2594) protein is ATP synthase subunit alpha.